The primary structure comprises 92 residues: N(2)-fixation sustaining protein CowN (92 aa).

Belongs to the CowN family.

In terms of biological role, is required to sustain N(2)-dependent growth in the presence of low levels of carbon monoxide (CO). Probably acts by protecting the N(2) fixation ability of the nitrogenase complex, which is inactivated in the presence of CO. The protein is N(2)-fixation sustaining protein CowN of Cereibacter sphaeroides (strain ATCC 17025 / ATH 2.4.3) (Rhodobacter sphaeroides).